The primary structure comprises 439 residues: Leukocyte immunoglobulin-like receptor subfamily A member 3 (439 aa).

Residues 1–23 (MTPILTVLICLGLSLDPRTHVQA) form the signal peptide. Ig-like C2-type domains follow at residues 27-108 (PKPT…AGLS), 119-224 (TGAY…GVSK), 226-315 (PSLS…DPLD), and 326-415 (PFLS…SDPL). Cys49 and Cys98 are joined by a disulfide. Asn140 carries N-linked (GlcNAc...) asparagine glycosylation. 3 disulfide bridges follow: Cys145–Cys197, Cys157–Cys167, and Cys246–Cys297. 3 N-linked (GlcNAc...) asparagine glycosylation sites follow: Asn281, Asn302, and Asn341. Cys346 and Cys397 are joined by a disulfide. N-linked (GlcNAc...) asparagine glycosylation occurs at Asn431.

In terms of processing, N-glycosylation is required for ligand binding. In terms of tissue distribution, detected in B-cells, and at lower levels in natural killer (NK) cells. Detected in peripheral blood monocytes and lung.

Its subcellular location is the secreted. Functionally, acts as a soluble receptor for class I MHC antigens. Binds both classical and non-classical HLA class I molecules but with reduced affinities compared to LILRB1 or LILRB2. Binds with high affinity to the surface of monocytes, leading to abolish LPS-induced TNF-alpha production by monocytes. This Homo sapiens (Human) protein is Leukocyte immunoglobulin-like receptor subfamily A member 3 (LILRA3).